The chain runs to 293 residues: tRNA-cytidine(32) 2-sulfurtransferase (293 aa).

The short motif at 62 to 67 (SGGKDS) is the PP-loop motif element. Residues cysteine 137, cysteine 140, and cysteine 228 each contribute to the [4Fe-4S] cluster site.

The protein belongs to the TtcA family. Homodimer. Mg(2+) is required as a cofactor. [4Fe-4S] cluster serves as cofactor.

The protein resides in the cytoplasm. It carries out the reaction cytidine(32) in tRNA + S-sulfanyl-L-cysteinyl-[cysteine desulfurase] + AH2 + ATP = 2-thiocytidine(32) in tRNA + L-cysteinyl-[cysteine desulfurase] + A + AMP + diphosphate + H(+). Its pathway is tRNA modification. Catalyzes the ATP-dependent 2-thiolation of cytidine in position 32 of tRNA, to form 2-thiocytidine (s(2)C32). The sulfur atoms are provided by the cysteine/cysteine desulfurase (IscS) system. In Brucella abortus (strain S19), this protein is tRNA-cytidine(32) 2-sulfurtransferase.